The following is a 342-amino-acid chain: Hypoxia responsive morphology factor C (342 aa).

The Bipartite nuclear localization signal signature appears at 46-68; that stretch reads RMKIPRRKSEYSSHDRLKRARKI. Residues 151–181 are RNA recognition motif (RRM)-like domain; sequence ADDAWAYNAADMDTAVKFFSEAIYKAIESSP.

This sequence belongs to the hrmA family.

It is found in the nucleus. Its function is as follows. Probably modulates the generation of the hypoxia-typic morphotype (called H-MORPH) with altered biofilm architecture that leads to increased host inflammation, rapid disease progression, and mortality in a murine model of invasive aspergillosis. The sequence is that of Hypoxia responsive morphology factor C from Aspergillus fumigatus (strain CBS 144.89 / FGSC A1163 / CEA10) (Neosartorya fumigata).